We begin with the raw amino-acid sequence, 161 residues long: Lipoprotein LpqH (161 aa).

The N-terminal stretch at 1 to 21 (MNRQLRFAVAGPEILAAVVSG) is a signal peptide. The segment covering 21-46 (GCSSGNKSAPSSSASSSSTSPSASSG) has biased composition (low complexity). The tract at residues 21 to 49 (GCSSGNKSAPSSSASSSSTSPSASSGGAA) is disordered. Residue cysteine 22 is the site of N-palmitoyl cysteine attachment. Cysteine 22 carries the S-diacylglycerol cysteine lipid modification.

The protein belongs to the mycobacterial 19 kDa antigen family. Modified by Lgt on Cys-22 with an S-linked diacylglycerol with a mixture of C16, C18 and C19 fatty acids, signal peptide is removed by LspA, modifed by Lnt with an amide-linked mixture of C16 and C19 fatty acids.

It localises to the cell membrane. Functionally, might be involved in ligand transport. A host TLR2 agonist, modifies host gene expression in response to pathogen. The sequence is that of Lipoprotein LpqH (lpqH) from Mycobacterium avium.